We begin with the raw amino-acid sequence, 1392 residues long: ATP-dependent helicase/nuclease subunit A (1392 aa).

The region spanning 3–489 is the UvrD-like helicase ATP-binding domain; sequence NPKWTPAQQA…IDLNQNFRSR (487 aa). 24-31 is a binding site for ATP; that stretch reads AAAGSGKT. Disordered stretches follow at residues 291–319, 556–594, and 1051–1126; these read RGSKKNLPDSLIDEENSKRLREESKKARD, RGAEDAATGADSPAKGEGEEFEQNREPESGDDESSLEEA, and GPVQ…LDTK. Basic and acidic residues-rich tracts occupy residues 305–319 and 569–583; these read ENSKRLREESKKARD and AKGEGEEFEQNREPE. Positions 556–886 constitute a UvrD-like helicase C-terminal domain; the sequence is RGAEDAATGA…RFITVHSSKG (331 aa). The segment covering 584–594 has biased composition (acidic residues); the sequence is SGDDESSLEEA. Residues 1088–1113 show a composition bias toward basic and acidic residues; it reads ASGKTEIPGETKNSEETKTSEDKKNL.

The protein belongs to the helicase family. AddA subfamily. In terms of assembly, heterodimer of AddA and AddB/RexB. Mg(2+) is required as a cofactor.

It catalyses the reaction Couples ATP hydrolysis with the unwinding of duplex DNA by translocating in the 3'-5' direction.. The catalysed reaction is ATP + H2O = ADP + phosphate + H(+). The heterodimer acts as both an ATP-dependent DNA helicase and an ATP-dependent, dual-direction single-stranded exonuclease. Recognizes the chi site generating a DNA molecule suitable for the initiation of homologous recombination. The AddA nuclease domain is required for chi fragment generation; this subunit has the helicase and 3' -&gt; 5' nuclease activities. The polypeptide is ATP-dependent helicase/nuclease subunit A (Desulfitobacterium hafniense (strain Y51)).